A 442-amino-acid polypeptide reads, in one-letter code: tRNA modification GTPase MnmE (442 aa).

The (6S)-5-formyl-5,6,7,8-tetrahydrofolate site is built by Arg-27, Glu-84, and Lys-124. The 146-residue stretch at 221–366 (GLHVVIVGAP…LLDALQAFAE (146 aa)) folds into the TrmE-type G domain. GTP-binding positions include 231 to 236 (NAGKSS), 250 to 256 (SKEAGTT), and 275 to 278 (DTAG). Ser-235 and Thr-256 together coordinate Mg(2+). Residue Lys-442 participates in (6S)-5-formyl-5,6,7,8-tetrahydrofolate binding.

It belongs to the TRAFAC class TrmE-Era-EngA-EngB-Septin-like GTPase superfamily. TrmE GTPase family. As to quaternary structure, homodimer. Heterotetramer of two MnmE and two MnmG subunits. K(+) serves as cofactor.

The protein resides in the cytoplasm. Exhibits a very high intrinsic GTPase hydrolysis rate. Involved in the addition of a carboxymethylaminomethyl (cmnm) group at the wobble position (U34) of certain tRNAs, forming tRNA-cmnm(5)s(2)U34. The protein is tRNA modification GTPase MnmE of Brucella suis biovar 1 (strain 1330).